The primary structure comprises 148 residues: UPF0756 membrane protein KPN78578_11500 (148 aa).

Transmembrane regions (helical) follow at residues 14–34 (ALGFISHNTTVAISILVLIIV), 51–71 (LTVGIIILTIGVMAPIASGTL), 86–106 (LLAIAVGVFVSWLGGRGVSLM), and 121–141 (VLGVALFRGVPVGPLIAAGII).

The protein belongs to the UPF0756 family.

It is found in the cell membrane. In Klebsiella pneumoniae subsp. pneumoniae (strain ATCC 700721 / MGH 78578), this protein is UPF0756 membrane protein KPN78578_11500.